A 38-amino-acid chain; its full sequence is Large ribosomal subunit protein bL36 (38 aa).

Belongs to the bacterial ribosomal protein bL36 family.

This chain is Large ribosomal subunit protein bL36, found in Mycoplasma mobile (strain ATCC 43663 / 163K / NCTC 11711) (Mesomycoplasma mobile).